The primary structure comprises 534 residues: Prolyl 4-hydroxylase subunit alpha-1 (534 aa).

Residues 1–17 (MIWVVLMMAILLPQSLA) form the signal peptide. Asn-113 carries an N-linked (GlcNAc...) asparagine glycan. Residues 205–238 (VSVLDYLSYAVYQQGDLDKALLLTKKLLELDPEH) form a TPR repeat. An N-linked (GlcNAc...) asparagine glycan is attached at Asn-259. One can recognise a Fe2OG dioxygenase domain in the interval 411-519 (TAEELQVANY…KWVSNKWLHE (109 aa)). Fe cation is bound by residues His-429, Asp-431, and His-500. Residue Lys-510 participates in 2-oxoglutarate binding.

Belongs to the P4HA family. As to quaternary structure, heterotetramer of two alpha-1 chains and two beta chains (P4HB)(the beta chain is the multi-functional PDI), where P4HB plays the role of a structural subunit; this tetramer catalyzes the formation of 4-hydroxyproline in collagen. It depends on Fe(2+) as a cofactor. Requires L-ascorbate as cofactor. Expressed at least in brain, heart and lung.

It localises to the endoplasmic reticulum lumen. The catalysed reaction is L-prolyl-[collagen] + 2-oxoglutarate + O2 = trans-4-hydroxy-L-prolyl-[collagen] + succinate + CO2. With respect to regulation, inhibited by poly(L-proline). Catalyzes the post-translational formation of 4-hydroxyproline in -Xaa-Pro-Gly- sequences in collagens and other proteins. This Mus musculus (Mouse) protein is Prolyl 4-hydroxylase subunit alpha-1 (P4ha1).